Consider the following 135-residue polypeptide: Germinal center-associated signaling and motility-like protein (135 aa).

A disordered region spans residues 1–68 (MGNYLLRKLS…ENGSGSEEVC (68 aa)). Residues 22–48 (GNPDEERKRQEMTTFERKLQDQDKKSQ) are compositionally biased toward basic and acidic residues. Residues 26–50 (EERKRQEMTTFERKLQDQDKKSQEV) are a coiled coil. Low complexity predominate over residues 51 to 66 (SSTSNQENENGSGSEE).

The sequence is that of Germinal center-associated signaling and motility-like protein (GCSAML) from Homo sapiens (Human).